The sequence spans 176 residues: Ribosome rescue factor SmrB (176 aa).

The Smr domain maps to Leu93–Asp168.

This sequence belongs to the SmrB family. As to quaternary structure, associates with collided ribosomes, but not with correctly translating polysomes.

Functionally, acts as a ribosome collision sensor. Detects stalled/collided disomes (pairs of ribosomes where the leading ribosome is stalled and a second ribosome has collided with it) and endonucleolytically cleaves mRNA at the 5' boundary of the stalled ribosome. Stalled/collided disomes form a new interface (primarily via the 30S subunits) that binds SmrB. Cleaved mRNA becomes available for tmRNA ligation, leading to ribosomal subunit dissociation and rescue of stalled ribosomes. The chain is Ribosome rescue factor SmrB from Shewanella baltica (strain OS155 / ATCC BAA-1091).